Reading from the N-terminus, the 39-residue chain is Cytochrome b559 subunit beta (39 aa).

The helical transmembrane segment at 14 to 30 (WLAIHGLAVPTVFFLGS) threads the bilayer. Heme is bound at residue His-18.

It belongs to the PsbE/PsbF family. In terms of assembly, heterodimer of an alpha subunit and a beta subunit. PSII is composed of 1 copy each of membrane proteins PsbA, PsbB, PsbC, PsbD, PsbE, PsbF, PsbH, PsbI, PsbJ, PsbK, PsbL, PsbM, PsbT, PsbX, PsbY, PsbZ, Psb30/Ycf12, at least 3 peripheral proteins of the oxygen-evolving complex and a large number of cofactors. It forms dimeric complexes. Heme b serves as cofactor.

It is found in the plastid. It localises to the chloroplast thylakoid membrane. In terms of biological role, this b-type cytochrome is tightly associated with the reaction center of photosystem II (PSII). PSII is a light-driven water:plastoquinone oxidoreductase that uses light energy to abstract electrons from H(2)O, generating O(2) and a proton gradient subsequently used for ATP formation. It consists of a core antenna complex that captures photons, and an electron transfer chain that converts photonic excitation into a charge separation. This Staurastrum punctulatum (Green alga) protein is Cytochrome b559 subunit beta.